Consider the following 564-residue polypeptide: Ribonuclease J (564 aa).

Residues H85, H87, D89, H90, H153, and D175 each contribute to the Zn(2+) site. 375-379 (HVSGH) contributes to the substrate binding site. H401 lines the Zn(2+) pocket.

Belongs to the metallo-beta-lactamase superfamily. RNA-metabolizing metallo-beta-lactamase-like family. Bacterial RNase J subfamily. As to quaternary structure, homodimer, may be a subunit of the RNA degradosome. Zn(2+) is required as a cofactor.

The protein localises to the cytoplasm. In terms of biological role, an RNase that has 5'-3' exonuclease and possibly endonuclease activity. Plays a role in 16S and 23S rRNA processing. Might have a role in mRNA maturation and/or decay. This chain is Ribonuclease J, found in Sinorhizobium meliloti (strain Sm2011 / Rm2011 / 2011).